A 205-amino-acid polypeptide reads, in one-letter code: MRGVFVTGTDTDVGKTMVSAWLAQHWRADYWKPIQTGSTEGTDFESVARLAPAARIHPSAVVLPAPLSPHEAARREKTRIDLSSLVPPVTDRPLVVEGAGGIMVPINEVALMIDLMERLSLPAVVVARSGLGTINHTLMTLEMLRRRRVPLLGVVMNGQKNPANRQAIEHFGGVRVLAEIQPLPAVTAATIAGLPPPTFTCPGDP.

Mg(2+) is bound at residue Thr-16. Lys-32 is a catalytic residue. Thr-36 serves as a coordination point for substrate. Glu-97 serves as a coordination point for Mg(2+). Residue 97-100 (EGAG) participates in ATP binding.

It belongs to the dethiobiotin synthetase family. As to quaternary structure, homodimer. Requires Mg(2+) as cofactor.

It is found in the cytoplasm. It catalyses the reaction (7R,8S)-7,8-diammoniononanoate + CO2 + ATP = (4R,5S)-dethiobiotin + ADP + phosphate + 3 H(+). It functions in the pathway cofactor biosynthesis; biotin biosynthesis; biotin from 7,8-diaminononanoate: step 1/2. Functionally, catalyzes a mechanistically unusual reaction, the ATP-dependent insertion of CO2 between the N7 and N8 nitrogen atoms of 7,8-diaminopelargonic acid (DAPA, also called 7,8-diammoniononanoate) to form a ureido ring. The polypeptide is ATP-dependent dethiobiotin synthetase BioD (Paramagnetospirillum magneticum (strain ATCC 700264 / AMB-1) (Magnetospirillum magneticum)).